Consider the following 640-residue polypeptide: Translation factor GUF1, mitochondrial (640 aa).

Residues Met-1 to Thr-26 constitute a mitochondrion transit peptide. Positions Glu-39–Thr-223 constitute a tr-type G domain. GTP contacts are provided by residues Ala-48–Ser-55, Asp-115–His-119, and Asn-169–Asp-172.

It belongs to the TRAFAC class translation factor GTPase superfamily. Classic translation factor GTPase family. LepA subfamily.

It is found in the mitochondrion inner membrane. It carries out the reaction GTP + H2O = GDP + phosphate + H(+). In terms of biological role, promotes mitochondrial protein synthesis. May act as a fidelity factor of the translation reaction, by catalyzing a one-codon backward translocation of tRNAs on improperly translocated ribosomes. Binds to mitochondrial ribosomes in a GTP-dependent manner. The sequence is that of Translation factor GUF1, mitochondrial from Lachancea thermotolerans (strain ATCC 56472 / CBS 6340 / NRRL Y-8284) (Yeast).